We begin with the raw amino-acid sequence, 303 residues long: D-alanine--D-alanine ligase (303 aa).

The 197-residue stretch at 104–300 (KLLWNAVGLP…FEKLVERVLE (197 aa)) folds into the ATP-grasp domain. 132-187 (IAKLSLPVFVKPSSEGSSVGVFKVKTKEELLPAITAALEFDTIVLVEEFLTGAEYS) is a binding site for ATP. The Mg(2+) site is built by aspartate 254, glutamate 267, and asparagine 269.

It belongs to the D-alanine--D-alanine ligase family. Mg(2+) serves as cofactor. Requires Mn(2+) as cofactor.

Its subcellular location is the cytoplasm. The catalysed reaction is 2 D-alanine + ATP = D-alanyl-D-alanine + ADP + phosphate + H(+). It participates in cell wall biogenesis; peptidoglycan biosynthesis. Functionally, cell wall formation. The chain is D-alanine--D-alanine ligase from Haemophilus ducreyi (strain 35000HP / ATCC 700724).